The sequence spans 382 residues: MSRPLVITEGMMIGVLLMLAPINALLLGFVQSTPDNNKTVREFNVYWNVPTFMCHKYGLRFEEVSEKYGILQNWMDKFRGEEIAILYDPGMFPALLKDPNGNVVARNGGVPQLGNLTKHLQVFRDHLINQIPDKSFPGVGVIDFESWRPIFRQNWASLQPYKKLSVEVVRREHPFWDDQRVEQEAKRRFEKYGQLFMEETLKAAKRMRPAANWGYYAYPYCYNLTPNQPSAQCEATTMQENDKMSWLFESEDVLLPSVYLRWNLTSGERVGLVGGRVKEALRIARQMTTSRKKVLPYYWYKYQDRRDTDLSRADLEATLRKITDLGADGFIIWGSSDDINTKAKCLQFREYLNNELGPAVKRIALNNNANDRLTVDVSVDQV.

Residues 1-28 constitute a signal peptide (or 24); it reads MSRPLVITEGMMIGVLLMLAPINALLLG. A propeptide spanning residues 29–33 is cleaved from the precursor; that stretch reads FVQST. 2 cysteine pairs are disulfide-bonded: cysteine 54–cysteine 345 and cysteine 221–cysteine 233. The N-linked (GlcNAc...) asparagine glycan is linked to asparagine 115. Catalysis depends on glutamate 145, which acts as the Proton donor. Asparagine 263 carries an N-linked (GlcNAc...) (complex) asparagine glycan.

The protein belongs to the glycosyl hydrolase 56 family. As to quaternary structure, homotetramer. In terms of processing, N-glycosylated. Glycans found include a majority of small oligosaccharides (Man1-3GlcNAc2), most of which are either alpha 1,3-monofucosylated or alpha 1,3-(alpha 1,6-)difucosylated at the innermost GlcNAc residue, approximately 5% of high-mannose type structures, and 8% contains the terminal trisaccharide GalNAc beta 1-4[Fuc alpha 1-3]GlcNAc beta 1-in beta 1,2-linkage to the core alpha 1,3-mannosyl residue. Expressed in the venom glands of worker bees. It is also detected in the testes of drones but not in the queen-bee venom glands or in pupae.

It is found in the secreted. The catalysed reaction is Random hydrolysis of (1-&gt;4)-linkages between N-acetyl-beta-D-glucosamine and D-glucuronate residues in hyaluronate.. In terms of biological role, hydrolyzes high molecular weight hyaluronic acid to produce small oligosaccharides. The chain is Hyaluronidase from Apis mellifera (Honeybee).